Reading from the N-terminus, the 728-residue chain is Polyphosphate kinase (728 aa).

N57 lines the ATP pocket. The Mg(2+) site is built by R408 and R438. H468 functions as the Phosphohistidine intermediate in the catalytic mechanism. Residues Y501, R597, and H625 each coordinate ATP. Residues 694 to 728 (VQRRPASPEQSQSSQAIFTAQAIAETTEDPELRSV) are disordered. Residues 695-709 (QRRPASPEQSQSSQA) show a composition bias toward low complexity.

This sequence belongs to the polyphosphate kinase 1 (PPK1) family. Requires Mg(2+) as cofactor. An intermediate of this reaction is the autophosphorylated ppk in which a phosphate is covalently linked to a histidine residue through a N-P bond.

The catalysed reaction is [phosphate](n) + ATP = [phosphate](n+1) + ADP. Catalyzes the reversible transfer of the terminal phosphate of ATP to form a long-chain polyphosphate (polyP). The polypeptide is Polyphosphate kinase (Synechocystis sp. (strain ATCC 27184 / PCC 6803 / Kazusa)).